The following is a 593-amino-acid chain: DNA primase (593 aa).

The CHC2-type zinc-finger motif lies at 38–62; it reads CPFHQEKTPSFTVSDSKRFFYCFGC. Residues 250 to 332 enclose the Toprim domain; that stretch reads NRSILVEGYF…EKKISFIRLP (83 aa). Residues Glu-256, Asp-300, and Asp-302 each contribute to the Mg(2+) site.

Belongs to the DnaG primase family. As to quaternary structure, monomer. Interacts with DnaB. Zn(2+) serves as cofactor. The cofactor is Mg(2+).

It carries out the reaction ssDNA + n NTP = ssDNA/pppN(pN)n-1 hybrid + (n-1) diphosphate.. RNA polymerase that catalyzes the synthesis of short RNA molecules used as primers for DNA polymerase during DNA replication. The protein is DNA primase of Rickettsia prowazekii (strain Madrid E).